The primary structure comprises 326 residues: Putative nickel insertion protein (326 aa).

Belongs to the LarC family.

This chain is Putative nickel insertion protein, found in Enterococcus faecalis (strain ATCC 700802 / V583).